A 206-amino-acid chain; its full sequence is Ras-related protein Rab7 (206 aa).

Residues 15-22, 63-67, and 125-128 contribute to the GTP site; these read GDTGVGKT, DTAGQ, and NKID. Residues C204 and C206 are each lipidated (S-geranylgeranyl cysteine). A Cysteine methyl ester modification is found at C206.

Belongs to the small GTPase superfamily. Rab family.

The protein resides in the cell membrane. Functionally, protein transport. Probably involved in vesicular traffic. This Vigna aconitifolia (Moth bean) protein is Ras-related protein Rab7.